Consider the following 153-residue polypeptide: NAD(P)H-quinone oxidoreductase subunit N (153 aa).

The protein belongs to the complex I NdhN subunit family. As to quaternary structure, NDH-1 can be composed of about 15 different subunits; different subcomplexes with different compositions have been identified which probably have different functions.

Its subcellular location is the cellular thylakoid membrane. The enzyme catalyses a plastoquinone + NADH + (n+1) H(+)(in) = a plastoquinol + NAD(+) + n H(+)(out). It catalyses the reaction a plastoquinone + NADPH + (n+1) H(+)(in) = a plastoquinol + NADP(+) + n H(+)(out). In terms of biological role, NDH-1 shuttles electrons from an unknown electron donor, via FMN and iron-sulfur (Fe-S) centers, to quinones in the respiratory and/or the photosynthetic chain. The immediate electron acceptor for the enzyme in this species is believed to be plastoquinone. Couples the redox reaction to proton translocation, and thus conserves the redox energy in a proton gradient. Cyanobacterial NDH-1 also plays a role in inorganic carbon-concentration. This is NAD(P)H-quinone oxidoreductase subunit N from Synechococcus sp. (strain WH7803).